The primary structure comprises 359 residues: MKTLHVELGERGYPIYIGRGLLGHPDLIQAHLPGGQVLVVTNEVVAPLYLDRMLASLAGKDTGSVVLPDGEAHKTLDSAMAVFDALLARRFGRNAAIVALGGGVIGDLAGFAAACYQRGVPFIQVPTTLLSQVDSSVGGKTAVNHPRGKNMIGAFYQPRCVLADTDTLDTLPDRELSAGLAEVIKYGFIRDPEFLAWLEANVERLLQRDPEALAYAIERSCINKAEIVAEDETETGVRATLNLGHTFGHAIETGMGYGVCLHGEAVAIGMCQAADLSRRLGWIGDDEVARVIRLLERARLPVVPPRELDADAFLEHMAVDKKNVDGGLRLVLLKSLGEATLPVAVDAGLLRATLECYGR.

NAD(+) is bound by residues 69–74 (DGEAHK), 103–107 (GVIGD), 127–128 (TT), Lys140, Lys149, and 167–170 (TLDT). The Zn(2+) site is built by Glu182, His245, and His262.

This sequence belongs to the sugar phosphate cyclases superfamily. Dehydroquinate synthase family. The cofactor is Co(2+). Zn(2+) is required as a cofactor. It depends on NAD(+) as a cofactor.

The protein localises to the cytoplasm. The catalysed reaction is 7-phospho-2-dehydro-3-deoxy-D-arabino-heptonate = 3-dehydroquinate + phosphate. It participates in metabolic intermediate biosynthesis; chorismate biosynthesis; chorismate from D-erythrose 4-phosphate and phosphoenolpyruvate: step 2/7. Its function is as follows. Catalyzes the conversion of 3-deoxy-D-arabino-heptulosonate 7-phosphate (DAHP) to dehydroquinate (DHQ). This is 3-dehydroquinate synthase from Methylococcus capsulatus (strain ATCC 33009 / NCIMB 11132 / Bath).